The chain runs to 251 residues: Pyrroloquinoline-quinone synthase (251 aa).

This sequence belongs to the PqqC family.

The catalysed reaction is 6-(2-amino-2-carboxyethyl)-7,8-dioxo-1,2,3,4,7,8-hexahydroquinoline-2,4-dicarboxylate + 3 O2 = pyrroloquinoline quinone + 2 H2O2 + 2 H2O + H(+). Its pathway is cofactor biosynthesis; pyrroloquinoline quinone biosynthesis. Its function is as follows. Ring cyclization and eight-electron oxidation of 3a-(2-amino-2-carboxyethyl)-4,5-dioxo-4,5,6,7,8,9-hexahydroquinoline-7,9-dicarboxylic-acid to PQQ. This Cronobacter sakazakii (strain ATCC BAA-894) (Enterobacter sakazakii) protein is Pyrroloquinoline-quinone synthase.